The chain runs to 661 residues: Transketolase (661 aa).

Position 28 (His28) interacts with substrate. Residues His68 and 116–118 (GPL) contribute to the thiamine diphosphate site. Glu157 is a binding site for Mg(2+). 2 residues coordinate thiamine diphosphate: Gly158 and Asn187. The Mg(2+) site is built by Asn187 and Ile189. The substrate site is built by His261 and Arg358. His261 contacts thiamine diphosphate. Glu412 functions as the Proton donor in the catalytic mechanism. Residue Phe438 coordinates thiamine diphosphate. Substrate contacts are provided by His462, Asp470, and Arg521.

This sequence belongs to the transketolase family. Homodimer. Mg(2+) serves as cofactor. Ca(2+) is required as a cofactor. The cofactor is Mn(2+). It depends on Co(2+) as a cofactor. Requires thiamine diphosphate as cofactor.

The catalysed reaction is D-sedoheptulose 7-phosphate + D-glyceraldehyde 3-phosphate = aldehydo-D-ribose 5-phosphate + D-xylulose 5-phosphate. In terms of biological role, catalyzes the transfer of a two-carbon ketol group from a ketose donor to an aldose acceptor, via a covalent intermediate with the cofactor thiamine pyrophosphate. The polypeptide is Transketolase (tkt) (Treponema pallidum (strain Nichols)).